A 205-amino-acid chain; its full sequence is High frequency lysogenization protein HflD homolog (205 aa).

The protein belongs to the HflD family.

The protein localises to the cytoplasm. It is found in the cell inner membrane. The protein is High frequency lysogenization protein HflD homolog of Haemophilus influenzae (strain ATCC 51907 / DSM 11121 / KW20 / Rd).